The following is a 200-amino-acid chain: Guanylate kinase (200 aa).

One can recognise a Guanylate kinase-like domain in the interval 4 to 183 (GAVLIISGPS…AKEAMVAIAR (180 aa)). Residue 11–18 (GPSGCGKS) participates in ATP binding.

The protein belongs to the guanylate kinase family.

The protein localises to the cytoplasm. It catalyses the reaction GMP + ATP = GDP + ADP. Its function is as follows. Essential for recycling GMP and indirectly, cGMP. In Helicobacter hepaticus (strain ATCC 51449 / 3B1), this protein is Guanylate kinase.